The following is a 393-amino-acid chain: Acetate kinase (393 aa).

N7 contacts Mg(2+). K14 contacts ATP. R87 contacts substrate. D144 serves as the catalytic Proton donor/acceptor. ATP-binding positions include H202–G206, D277–R279, and G326–N330. E380 is a binding site for Mg(2+).

It belongs to the acetokinase family. Homodimer. Requires Mg(2+) as cofactor. Mn(2+) serves as cofactor.

Its subcellular location is the cytoplasm. It catalyses the reaction acetate + ATP = acetyl phosphate + ADP. The protein operates within metabolic intermediate biosynthesis; acetyl-CoA biosynthesis; acetyl-CoA from acetate: step 1/2. Its function is as follows. Catalyzes the formation of acetyl phosphate from acetate and ATP. Can also catalyze the reverse reaction. In Mycoplasmopsis pulmonis (strain UAB CTIP) (Mycoplasma pulmonis), this protein is Acetate kinase.